Reading from the N-terminus, the 650-residue chain is Acetyl-coenzyme A synthetase (650 aa).

CoA is bound by residues 191–194 (RGGR), Thr311, and Asn335. Residues 387 to 389 (GEP), 411 to 416 (DTWWQT), Asp500, and Arg515 each bind ATP. Ser523 lines the CoA pocket. Position 526 (Arg526) interacts with ATP. The Mg(2+) site is built by Val537, His539, and Val542. A CoA-binding site is contributed by Arg584. Lys609 carries the post-translational modification N6-acetyllysine.

The protein belongs to the ATP-dependent AMP-binding enzyme family. Mg(2+) is required as a cofactor. Post-translationally, acetylated. Deacetylation by the SIR2-homolog deacetylase activates the enzyme.

It catalyses the reaction acetate + ATP + CoA = acetyl-CoA + AMP + diphosphate. Catalyzes the conversion of acetate into acetyl-CoA (AcCoA), an essential intermediate at the junction of anabolic and catabolic pathways. AcsA undergoes a two-step reaction. In the first half reaction, AcsA combines acetate with ATP to form acetyl-adenylate (AcAMP) intermediate. In the second half reaction, it can then transfer the acetyl group from AcAMP to the sulfhydryl group of CoA, forming the product AcCoA. This chain is Acetyl-coenzyme A synthetase, found in Shewanella baltica (strain OS155 / ATCC BAA-1091).